We begin with the raw amino-acid sequence, 254 residues long: Phytolongin Phyl1.1 (254 aa).

The Longin domain maps to 12 to 113 (CVSRDNQILY…TAMIGSINVE (102 aa)). The segment at 138–173 (ELKSSNLGEQSEGSNSTKAPLLGRLSKQEKKKGKDH) is disordered. Over residues 145–155 (GEQSEGSNSTK) the composition is skewed to polar residues. A helical; Anchor for type IV membrane protein membrane pass occupies residues 226 to 246 (IVLAIDAAICLTLFGIWLAIC).

This sequence belongs to the synaptobrevin family.

Its subcellular location is the membrane. Functionally, non-SNARE longin protein involved in membrane-trafficking machinery. The sequence is that of Phytolongin Phyl1.1 from Arabidopsis thaliana (Mouse-ear cress).